A 234-amino-acid polypeptide reads, in one-letter code: Uridylate kinase (234 aa).

10-11 (GS) is an ATP binding site. Glycine 44 is a binding site for UMP. Positions 45 and 49 each coordinate ATP. Residues aspartate 66 and 114–120 (ITPGQTT) contribute to the UMP site. The ATP site is built by threonine 140, tyrosine 146, and aspartate 149.

Belongs to the UMP kinase family. In terms of assembly, homohexamer.

The protein localises to the cytoplasm. It carries out the reaction UMP + ATP = UDP + ADP. The protein operates within pyrimidine metabolism; CTP biosynthesis via de novo pathway; UDP from UMP (UMPK route): step 1/1. Inhibited by UTP. In terms of biological role, catalyzes the reversible phosphorylation of UMP to UDP. This chain is Uridylate kinase, found in Methanoregula boonei (strain DSM 21154 / JCM 14090 / 6A8).